A 494-amino-acid chain; its full sequence is Ribosomal lysine N-methyltransferase 4 (494 aa).

The SET domain occupies 25-265 (PKIEIKDLCC…KNEQVYNIYG (241 aa)). Y264 contacts S-adenosyl-L-methionine.

Belongs to the class V-like SAM-binding methyltransferase superfamily. Histone-lysine methyltransferase family. SETD6 subfamily.

The protein localises to the nucleus. Its function is as follows. S-adenosyl-L-methionine-dependent protein-lysine N-methyltransferase that monomethylates 60S ribosomal protein L42 (RPL42A and RPL42B) at 'Lys-55'. The chain is Ribosomal lysine N-methyltransferase 4 from Saccharomyces cerevisiae (strain ATCC 204508 / S288c) (Baker's yeast).